Here is a 516-residue protein sequence, read N- to C-terminus: DNA topoisomerase large subunit (516 aa).

Position 128–136 (128–136 (VTGGMNGVG)) interacts with ATP. The DNA-binding element occupies 369–400 (AALARKLAAEKAAETKAAKKASKAKVHKHIKA).

This sequence belongs to the type II topoisomerase family. Part of the DNA topoisomerase complex made of gp39, gp52 and gp60. The cofactor is Mg(2+).

It carries out the reaction ATP-dependent breakage, passage and rejoining of double-stranded DNA.. In terms of biological role, large subunit of the DNA topoisomerase that untwists superhelical DNA. Controls of topological states of double-stranded DNA by transient breakage and subsequent rejoining of DNA strands. This Escherichia coli (Bacteriophage T4) protein is DNA topoisomerase large subunit (39).